The sequence spans 207 residues: MARYLGPKAKLARREGTDLFLKSARRAIGDKSKFETKPGQHGRTSGSRTSDFGLQLREKQKVKRMYGVLERQFRRYFAEAERRKGNTGANLLLLLESRLDNVVYRMGFGSTRAEARQLVSHKGITVNGEVVNIASYLVKTGDVVAVREKAKKQLRVTESLKLAESMGLPAWVQVDATKLEGVFKKSPDRDEFGSDINESLIVELYSR.

Residues 31–54 (KSKFETKPGQHGRTSGSRTSDFGL) are disordered. Residues 42-52 (GRTSGSRTSDF) show a composition bias toward polar residues. An S4 RNA-binding domain is found at 97–158 (SRLDNVVYRM…KAKKQLRVTE (62 aa)).

Belongs to the universal ribosomal protein uS4 family. In terms of assembly, part of the 30S ribosomal subunit. Contacts protein S5. The interaction surface between S4 and S5 is involved in control of translational fidelity.

In terms of biological role, one of the primary rRNA binding proteins, it binds directly to 16S rRNA where it nucleates assembly of the body of the 30S subunit. Its function is as follows. With S5 and S12 plays an important role in translational accuracy. The polypeptide is Small ribosomal subunit protein uS4 (Methylibium petroleiphilum (strain ATCC BAA-1232 / LMG 22953 / PM1)).